Here is a 172-residue protein sequence, read N- to C-terminus: MISGPPGSGKSTYAKRLAEDLGLSYYSTGTIFRSIARERGLSLAEMSRLAEEDPRIDLEIDRRTLDVASRGGVVIDSHLAAWLLRDKAQYLVLVKAPVWVRVRRIARRDGVPLRRALAETVEREWSQRLRFKRYYGIDVSDTTIFHLTVDTSMYSVEDTYRLILEGARRRGL.

An ATP-binding site is contributed by 4-12 (GPPGSGKST).

It belongs to the cytidylate kinase family. Type 2 subfamily.

The protein localises to the cytoplasm. The enzyme catalyses CMP + ATP = CDP + ADP. The catalysed reaction is dCMP + ATP = dCDP + ADP. The protein is Cytidylate kinase (cmk) of Aeropyrum pernix (strain ATCC 700893 / DSM 11879 / JCM 9820 / NBRC 100138 / K1).